A 632-amino-acid chain; its full sequence is tRNA uridine 5-carboxymethylaminomethyl modification enzyme MnmG (632 aa).

FAD is bound by residues 13 to 18 (GGGHAG), Val125, and Ser180. 273 to 287 (GPRYCPSIEDKINRF) contributes to the NAD(+) binding site. An FAD-binding site is contributed by Gln370.

Belongs to the MnmG family. Homodimer. Heterotetramer of two MnmE and two MnmG subunits. FAD is required as a cofactor.

It is found in the cytoplasm. Its function is as follows. NAD-binding protein involved in the addition of a carboxymethylaminomethyl (cmnm) group at the wobble position (U34) of certain tRNAs, forming tRNA-cmnm(5)s(2)U34. This Shewanella sediminis (strain HAW-EB3) protein is tRNA uridine 5-carboxymethylaminomethyl modification enzyme MnmG.